Reading from the N-terminus, the 473-residue chain is Dol-P-Glc:Glc(2)Man(9)GlcNAc(2)-PP-Dol alpha-1,2-glucosyltransferase (473 aa).

The Cytoplasmic segment spans residues 1 to 6 (MAQLEG). A helical membrane pass occupies residues 7-27 (YYFSAALSCTFLVSCLLFSAF). Residues 28–64 (SRALREPYMDEIFHLPQAQRYCEGHFSLSQWDPMITT) lie on the Extracellular side of the membrane. A helical membrane pass occupies residues 65–85 (LPGLYLVSIGVIKPAIWIFGW). At 86–97 (SEHVVCSIGMLR) the chain is on the cytoplasmic side. A helical membrane pass occupies residues 98-118 (FVNLLFSVGNFYLLYLLFCKV). The Extracellular portion of the chain corresponds to 119 to 130 (QPRNKAASSIQR). The next 2 helical transmembrane spans lie at 131–151 (VLSTLTLAVFPTLYFFNFLYY) and 152–172 (TEAGSMFFTLFAYLMCLYGNH). Topologically, residues 173-175 (KTS) are extracellular. A helical membrane pass occupies residues 176–196 (AFLGFCGFMFRQTNIIWAVFC). Residues 197–249 (AGNVIAQKLTEAWKTELQKKEDRLPPIKGPFAEFRKILQFLLAYSMSFKNLSM) are Cytoplasmic-facing. A helical membrane pass occupies residues 250-270 (LLLLTWPYILLGFLFCAFVVV). At 271 to 283 (NGGIVIGDRSSHE) the chain is on the extracellular side. A helical transmembrane segment spans residues 284–304 (ACLHFPQLFYFFSFTLFFSFP). The Cytoplasmic segment spans residues 305–323 (HLLSPSKIKTFLSLVWKRR). Residues 324–344 (ILFFVVTLVSVFLVWKFTYAH) form a helical membrane-spanning segment. At 345-367 (KYLLADNRHYTFYVWKRVFQRYE) the chain is on the extracellular side. The chain crosses the membrane as a helical span at residues 368–388 (TVKYLLVPAYIFAGWSIADSL). Residues 389–392 (KSKS) are Cytoplasmic-facing. A helical transmembrane segment spans residues 393 to 413 (IFWNLMFFICLFTVIVPQKLL). Over 414–436 (EFRYFILPYVIYRLNIPLPPTSR) the chain is Extracellular. A helical transmembrane segment spans residues 437–457 (LICELSCYAVVNFITFFIFLN). Residues 458–473 (KTFQWPNSQDIQRFMW) are Cytoplasmic-facing.

Belongs to the ALG10 glucosyltransferase family.

Its subcellular location is the endoplasmic reticulum membrane. The catalysed reaction is an alpha-D-Glc-(1-&gt;3)-alpha-D-Glc-(1-&gt;3)-alpha-D-Man-(1-&gt;2)-alpha-D-Man-(1-&gt;2)-alpha-D-Man-(1-&gt;3)-[alpha-D-Man-(1-&gt;2)-alpha-D-Man-(1-&gt;3)-[alpha-D-Man-(1-&gt;2)-alpha-D-Man-(1-&gt;6)]-alpha-D-Man-(1-&gt;6)]-beta-D-Man-(1-&gt;4)-beta-D-GlcNAc-(1-&gt;4)-alpha-D-GlcNAc-diphospho-di-trans,poly-cis-dolichol + a di-trans,poly-cis-dolichyl beta-D-glucosyl phosphate = a alpha-D-Glc-(1-&gt;2)-alpha-D-Glc-(1-&gt;3)-alpha-D-Glc-(1-&gt;3)-alpha-D-Man-(1-&gt;2)-alpha-D-Man-(1-&gt;2)-alpha-D-Man-(1-&gt;3)-[alpha-D-Man-(1-&gt;2)-alpha-D-Man-(1-&gt;3)-[alpha-D-Man-(1-&gt;2)-alpha-D-Man-(1-&gt;6)]-alpha-D-Man-(1-&gt;6)]-beta-D-Man-(1-&gt;4)-beta-D-GlcNAc-(1-&gt;4)-alpha-D-GlcNAc-diphospho-di-trans,poly-cis-dolichol + a di-trans,poly-cis-dolichyl phosphate + H(+). It functions in the pathway protein modification; protein glycosylation. Functionally, dol-P-Glc:Glc(2)Man(9)GlcNAc(2)-PP-Dol alpha-1,2-glucosyltransferase that operates in the biosynthetic pathway of dolichol-linked oligosaccharides, the glycan precursors employed in protein asparagine (N)-glycosylation. The assembly of dolichol-linked oligosaccharides begins on the cytosolic side of the endoplasmic reticulum membrane and finishes in its lumen. The sequential addition of sugars to dolichol pyrophosphate produces dolichol-linked oligosaccharides containing fourteen sugars, including two GlcNAcs, nine mannoses and three glucoses. Once assembled, the oligosaccharide is transferred from the lipid to nascent proteins by oligosaccharyltransferases. In the lumen of the endoplasmic reticulum, adds the third and last glucose residue from dolichyl phosphate glucose (Dol-P-Glc) onto the lipid-linked oligosaccharide intermediate Glc(2)Man(9)GlcNAc(2)-PP-Dol to produce Glc(3)Man(9)GlcNAc(2)-PP-Dol. The polypeptide is Dol-P-Glc:Glc(2)Man(9)GlcNAc(2)-PP-Dol alpha-1,2-glucosyltransferase (Homo sapiens (Human)).